The chain runs to 265 residues: Glutamate racemase 2 (265 aa).

Substrate is bound by residues 7–8 and 39–40; these read DS and YG. Residue C70 is the Proton donor/acceptor of the active site. Residue 71–72 coordinates substrate; it reads NT. The active-site Proton donor/acceptor is the C182. 183-184 is a substrate binding site; that stretch reads TH.

The protein belongs to the aspartate/glutamate racemases family.

It carries out the reaction L-glutamate = D-glutamate. The protein operates within cell wall biogenesis; peptidoglycan biosynthesis. Its function is as follows. Provides the (R)-glutamate required for cell wall biosynthesis. In Bacillus subtilis (strain 168), this protein is Glutamate racemase 2 (yrpC).